An 834-amino-acid polypeptide reads, in one-letter code: Pentatricopeptide repeat-containing protein At4g39530 (834 aa).

PPR repeat units lie at residues 78 to 112, 113 to 144, 145 to 181, 182 to 212, 213 to 247, 248 to 282, 283 to 313, 314 to 348, 349 to 383, 384 to 414, 415 to 452, 453 to 487, 488 to 518, 519 to 553, 554 to 588, 589 to 619, 620 to 654, 655 to 689, and 690 to 720; these read DTYL…NLVS, WSTM…KDSP, NEYI…GFDR, DVYV…LPEK, STVT…NVVP, DGYI…GLEM, DASL…MPNK, NIIS…GLKP, DMYA…NLGN, DSYV…FAAA, DVVL…LIRP, SLLT…GLNL, DIFA…MKVK, DLVI…RERP, DEFT…GLEC, NPYI…AASR, DVVC…GIEP, NYIT…GIEP, and ETEH…MPTK. A type E motif region spans residues 725-800; it reads VWRSLLSGCA…EPGRSWIGIN (76 aa). The type E(+) motif stretch occupies residues 801–831; the sequence is KEVHIFLSKDKSHCKANQIYEVLDDLLVQIR.

It belongs to the PPR family. PCMP-E subfamily.

The sequence is that of Pentatricopeptide repeat-containing protein At4g39530 (PCMP-E52) from Arabidopsis thaliana (Mouse-ear cress).